The chain runs to 892 residues: MTQYTPMIQQYLKVKADYQDAFLFFRLGDFYEMFFEDAVKAAHELEITLTSRDGGSSDRIPMCGVPHHAAKNYIEQLVEKGYKVAVCEQVEDPKTAKGVVRREVVQLITPGTMMEGRTIDEKENNFLAALTHFEDGSYALACNDLTTGQNTVTLLTGSVEDILLEVYATGSKEIVVDSSFSKDELNKLTETLKMTISYEDATAIPEGLEHLVKNVSQAKLIKAIGRLFNYVIRTQKRSLDHLQPVEIYYTNQFMKIDVHSKRNLELTETLRTKEKTGSLLWLLDKTKTAMGGRMLKQWMERPLIQKEKVEERLEMVETFVNDYFLREDLKEKLKEVYDLERLAGKVAFGNVNARDLLQLRRSLLQVPAILEAISLLDNAYAARLIQGADPCESLTELLGRSIQENPPLSIKDGDIIKDGYNDKLDQYRYVSKNGKTWIAELEKRERDITGVKSLKIGYNRIFGYYIEVTKANLAALPEGRYERKQTLANAERFITDELKEKETLILEAEEKIVQLEYDLFTALREEVKVFIPKLQHLAKVISELDVLQSFATVSEEEQFVKPVLTTKREIFIKDGRHPVVEKVLNGKLYVPNDCIMPEKMDVFLITGPNMSGKSTYMRQLALVTVMSQIGCFVPATEAVLPVFDQIFTRIGAADDLISGQSTFMVEMLEAKNAIANASERSLILFDEIGRGTSTYDGMALAQAIIEHIHDQIGAKTLFSTHYHELTVLEESLDQLKNVHVSAIEENGKVVFLHKIQDGAADKSYGIHVAQLAELPDSLIARAKEVLAQLEGQEEIIIPKRVEVKVQEQEVIPEPVVVKEEPVEVLEAKVETEEESQLSFFGGEQSSKKQDKLALNQKETAVLAQIKKIDLLDMTPLEAMNELYRLQKKLKKG.

607–614 (GPNMSGKS) contacts ATP.

Belongs to the DNA mismatch repair MutS family.

In terms of biological role, this protein is involved in the repair of mismatches in DNA. It is possible that it carries out the mismatch recognition step. This protein has a weak ATPase activity. In Bacillus cereus (strain G9842), this protein is DNA mismatch repair protein MutS.